Consider the following 105-residue polypeptide: BLOC-1-related complex subunit 7 (105 aa).

It belongs to the BORCS7 family. Component of the BLOC-one-related complex (BORC) which is composed of BLOC1S1, BLOC1S2, BORCS5, BORCS6, BORCS7, BORCS8, KXD1 and SNAPIN.

It localises to the lysosome membrane. In terms of biological role, as part of the BORC complex may play a role in lysosomes movement and localization at the cell periphery. Associated with the cytosolic face of lysosomes, the BORC complex may recruit ARL8B and couple lysosomes to microtubule plus-end-directed kinesin motor. The polypeptide is BLOC-1-related complex subunit 7 (Mus musculus (Mouse)).